The primary structure comprises 45 residues: Large ribosomal subunit protein bL34 (45 aa).

The protein belongs to the bacterial ribosomal protein bL34 family.

The sequence is that of Large ribosomal subunit protein bL34 from Arthrobacter sp. (strain FB24).